The sequence spans 648 residues: Zinc finger protein grt1 (648 aa).

The segment at residues 13-42 (ACENCRKRKVKCSGGDVCFECQKYNENCVY) is a DNA-binding region (zn(2)-C6 fungal-type).

In terms of assembly, monomer.

Its subcellular location is the nucleus. May be involved in the facilitation of anaphase progression in mitosis. In Schizosaccharomyces pombe (strain 972 / ATCC 24843) (Fission yeast), this protein is Zinc finger protein grt1 (grt1).